The following is a 291-amino-acid chain: ATP synthase gamma chain (291 aa).

Belongs to the ATPase gamma chain family. As to quaternary structure, F-type ATPases have 2 components, CF(1) - the catalytic core - and CF(0) - the membrane proton channel. CF(1) has five subunits: alpha(3), beta(3), gamma(1), delta(1), epsilon(1). CF(0) has three main subunits: a, b and c.

The protein resides in the cell inner membrane. Produces ATP from ADP in the presence of a proton gradient across the membrane. The gamma chain is believed to be important in regulating ATPase activity and the flow of protons through the CF(0) complex. This Rhodopseudomonas palustris (strain ATCC BAA-98 / CGA009) protein is ATP synthase gamma chain.